A 351-amino-acid polypeptide reads, in one-letter code: Heme A synthase (351 aa).

8 helical membrane-spanning segments follow: residues 17-37, 103-123, 129-149, 164-184, 201-221, 261-281, 289-309, and 316-336; these read WLIL…ATRL, LIGL…WLGQ, LVGL…MVSS, LMTH…LWLD, AMAL…VAGL, FNHR…AWAF, EFAF…LTLV, and LALV…YTVW. H263 lines the heme pocket. H320 provides a ligand contact to heme.

It belongs to the COX15/CtaA family. Type 2 subfamily. As to quaternary structure, interacts with CtaB. It depends on heme b as a cofactor.

The protein resides in the cell membrane. The catalysed reaction is Fe(II)-heme o + 2 A + H2O = Fe(II)-heme a + 2 AH2. Its pathway is porphyrin-containing compound metabolism; heme A biosynthesis; heme A from heme O: step 1/1. In terms of biological role, catalyzes the conversion of heme O to heme A by two successive hydroxylations of the methyl group at C8. The first hydroxylation forms heme I, the second hydroxylation results in an unstable dihydroxymethyl group, which spontaneously dehydrates, resulting in the formyl group of heme A. The polypeptide is Heme A synthase (Hyphomonas neptunium (strain ATCC 15444)).